A 622-amino-acid polypeptide reads, in one-letter code: Vacuolar protein sorting-associated protein 27 (622 aa).

In terms of domain architecture, VHS spans 18-149; it reads SESIPNGDLD…KLISRGIKFP (132 aa). Position 157 is a phosphoserine (Ser-157). The segment at 170–230 adopts an FYVE-type; atypical zinc-finger fold; the sequence is WIDSDACMIC…VCDSCFEDYD (61 aa). The Zn(2+) site is built by Cys-176, Cys-179, Cys-192, Cys-195, Cys-200, His-203, Cys-222, and Cys-225. A disordered region spans residues 236–260; sequence DSKKSKKHRHKRKKDRDYSTPEDEE. Residues 239-249 are compositionally biased toward basic residues; that stretch reads KSKKHRHKRKK. Residues 258–277 enclose the UIM 1 domain; it reads DEEELIRKAIELSLKESRNS. Residue Lys-294 forms a Glycyl lysine isopeptide (Lys-Gly) (interchain with G-Cter in ubiquitin) linkage. Positions 301-320 constitute a UIM 2 domain; it reads EEDPDLKAAIQESLREAEEA. Residues 317-328 show a composition bias toward basic and acidic residues; that stretch reads AEEAKLRSERQK. Disordered stretches follow at residues 317–348 and 462–622; these read AEEA…IHSV and AESY…LIEL. The span at 462 to 500 shows a compositional bias: polar residues; that stretch reads AESYQTPPLQQLSSHQYKPQQDVSRQQSVKANSSPTTNI. Ser-495 carries the phosphoserine modification. The segment covering 533–548 has biased composition (acidic residues); that stretch reads EAEDEGTQAVQDEESS. Ser-613 carries the post-translational modification Phosphoserine.

Belongs to the VPS27 family. As to quaternary structure, component of the ESCRT-0 complex composed of HSE1 and VPS27. Interacts with ENT3 and ENT5, the ESCRT-I subunits VPS23 and VPS28 and with the COPIb subunits SEC27, SEC28 and SEC33. May form a complex composed of VPS27, HSE1 and DOA1. Interacts with DOA1. Interacts with ubiquitin.

Its subcellular location is the endosome membrane. Component of the ESCRT-0 complex which is the sorting receptor for ubiquitinated cargo proteins at the multivesicular body (MVB) and recruits ESCRT-I to the MVB outer membrane. Controls exit from the prevacuolar compartment (PVC) in both the forward direction to the vacuole and the return to the Golgi. Allows VPS10 to return to the (trans-Golgi network) TGN from the PVC. Might also function as an alternate adapter in the COPIb clathrin-like coat. The sequence is that of Vacuolar protein sorting-associated protein 27 (VPS27) from Saccharomyces cerevisiae (strain ATCC 204508 / S288c) (Baker's yeast).